The primary structure comprises 1189 residues: Pyruvate carboxylase (1189 aa).

The Biotin carboxylation domain maps to 21–473 (TMNKILVANR…WTTFIDDTPE (453 aa)). ATP contacts are provided by Lys139, Glu223, and His258. The ATP-grasp domain occupies 143–340 (RNLAYAANVP…IVAAQIQIAA (198 aa)). Residue Arg315 is part of the active site. Residues 559-826 (LMIMDTTWRD…ETGIPEANAR (268 aa)) form the Pyruvate carboxyltransferase domain. Substrate is bound by residues 567–571 (RDAHQ) and Arg640. An a divalent metal cation-binding site is contributed by Asp568. Residues Lys736, His766, and His768 each coordinate a divalent metal cation. Position 736 is an N6-carboxylysine (Lys736). A substrate-binding site is contributed by Thr900. One can recognise a Biotinyl-binding domain in the interval 1099–1174 (KADAHNPNEI…DASDLIPKSS (76 aa)). An N6-biotinyllysine modification is found at Lys1140.

The cofactor is biotin. Zn(2+) is required as a cofactor.

It is found in the cytoplasm. It carries out the reaction hydrogencarbonate + pyruvate + ATP = oxaloacetate + ADP + phosphate + H(+). It participates in carbohydrate biosynthesis; gluconeogenesis. Its function is as follows. Pyruvate carboxylase catalyzes a 2-step reaction, involving the ATP-dependent carboxylation of the covalently attached biotin in the first step and the transfer of the carboxyl group to pyruvate in the second. This chain is Pyruvate carboxylase (PYC1), found in Komagataella pastoris (Yeast).